Reading from the N-terminus, the 471-residue chain is RNA N(6)-adenosine-methyltransferase mettl16 (471 aa).

The RNA-binding stretch occupies residues 17–20 (PPDF). 6 residues coordinate S-adenosyl-L-methionine: Arg-82, Gly-106, Ser-110, Glu-129, Thr-160, and Asn-179. The K-loop stretch occupies residues 159–163 (KTLLM). RNA-binding regions lie at residues 194-206 (SRNSRRPPPSSIN), 245-249 (GKKCS), and 272-278 (QGRTMRW). VCR regions lie at residues 284-390 (FYDD…RAQE) and 421-470 (FLFK…VAKP). Residues 375–412 (RREQGRHLRELPRAQEPPSEETSVTEQQQQPDIPPESP) form a disordered region.

Belongs to the methyltransferase superfamily. METTL16/RlmF family.

It localises to the nucleus. It is found in the cytoplasm. The catalysed reaction is adenosine in U6 snRNA + S-adenosyl-L-methionine = N(6)-methyladenosine in U6 snRNA + S-adenosyl-L-homocysteine + H(+). The enzyme catalyses an adenosine in mRNA + S-adenosyl-L-methionine = an N(6)-methyladenosine in mRNA + S-adenosyl-L-homocysteine + H(+). Methyltransferase activity is autoinhibited by the K-loop region that blocks S-adenosyl-L-methionine-binding. Upon activation, K-loop changes conformation, allowing S-adenosyl-L-methionine-binding and subsequent methyltransferase activity. mRNA N6-adenosine-methyltransferase activity is inhibited by zinc. Functionally, RNA N6-methyltransferase that methylates adenosine residues at the N(6) position of a subset of RNAs and is involved in S-adenosyl-L-methionine homeostasis by regulating expression of MAT2A transcripts. Able to N6-methylate a subset of mRNAs and U6 small nuclear RNAs (U6 snRNAs). In contrast to the METTL3-METTL14 heterodimer, only able to methylate a limited number of RNAs: requires both a 5'UACAGAGAA-3' nonamer sequence and a specific RNA structure. Plays a key role in S-adenosyl-L-methionine homeostasis by mediating N6-methylation of MAT2A mRNAs, altering splicing of MAT2A transcripts: in presence of S-adenosyl-L-methionine, binds the 3'-UTR region of MAT2A mRNA and specifically N6-methylates the first hairpin of MAT2A mRNA, impairing MAT2A splicing and protein expression. In S-adenosyl-L-methionine-limiting conditions, binds the 3'-UTR region of MAT2A mRNA but stalls due to the lack of a methyl donor, preventing N6-methylation and promoting expression of MAT2A. In addition to mRNAs, also able to mediate N6-methylation of U6 small nuclear RNA (U6 snRNA): specifically N6-methylates adenine in position 43 of U6 snRNAs. This Danio rerio (Zebrafish) protein is RNA N(6)-adenosine-methyltransferase mettl16 (mettl16).